An 86-amino-acid chain; its full sequence is Protein Tat (86 aa).

The interval 1-21 (MDPVDPNLEPWNHPGSQPKTA) is disordered. The tract at residues 1–24 (MDPVDPNLEPWNHPGSQPKTACNR) is interaction with human CREBBP. Positions 1-48 (MDPVDPNLEPWNHPGSQPKTACNRCHCKKCCYHCQVCFITKGLGISYG) are transactivation. 3 residues coordinate Zn(2+): C22, C25, and C27. A cysteine-rich region spans residues 22–37 (CNRCHCKKCCYHCQVC). K28 is modified (N6-acetyllysine; by host PCAF). 4 residues coordinate Zn(2+): C30, H33, C34, and C37. The core stretch occupies residues 38-48 (FITKGLGISYG). A disordered region spans residues 47-86 (YGRKKRRQRRRPSQGGQTHQDPIPKQPSSQPRGNPTGPKE). Basic residues predominate over residues 48–58 (GRKKRRQRRRP). A Nuclear localization signal, RNA-binding (TAR), and protein transduction motif is present at residues 49 to 57 (RKKRRQRRR). Residues 49–86 (RKKRRQRRRPSQGGQTHQDPIPKQPSSQPRGNPTGPKE) form an interaction with the host capping enzyme RNGTT region. 2 positions are modified to N6-acetyllysine; by host EP300 and GCN5L2: K50 and K51. 2 positions are modified to asymmetric dimethylarginine; by host PRMT6: R52 and R53. The span at 60-79 (QGGQTHQDPIPKQPSSQPRG) shows a compositional bias: polar residues. A Glycyl lysine isopeptide (Lys-Gly) (interchain with G-Cter in ubiquitin) cross-link involves residue K71.

The protein belongs to the lentiviruses Tat family. In terms of assembly, interacts with host CCNT1. Associates with the P-TEFb complex composed at least of Tat, P-TEFb (CDK9 and CCNT1), TAR RNA, RNA Pol II. Recruits the HATs CREBBP, TAF1/TFIID, EP300, PCAF and GCN5L2. Interacts with host KAT5/Tip60; this interaction targets the latter to degradation. Interacts with the host deacetylase SIRT1. Interacts with host capping enzyme RNGTT; this interaction stimulates RNGTT. Binds to host KDR, and to the host integrins ITGAV/ITGB3 and ITGA5/ITGB1. Interacts with host KPNB1/importin beta-1 without previous binding to KPNA1/importin alpha-1. Interacts with EIF2AK2. Interacts with host nucleosome assembly protein NAP1L1; this interaction may be required for the transport of Tat within the nucleus, since the two proteins interact at the nuclear rim. Interacts with host C1QBP/SF2P32; this interaction involves lysine-acetylated Tat. Interacts with the host chemokine receptors CCR2, CCR3 and CXCR4. Interacts with host DPP4/CD26; this interaction may trigger an anti-proliferative effect. Interacts with host LDLR. Interacts with the host extracellular matrix metalloproteinase MMP1. Interacts with host PRMT6; this interaction mediates Tat's methylation. Interacts with, and is ubiquitinated by MDM2/Hdm2. Interacts with host PSMC3 and HTATIP2. Interacts with STAB1; this interaction may overcome SATB1-mediated repression of IL2 and IL2RA (interleukin) in T cells by binding to the same domain than HDAC1. Interacts (when acetylated) with human CDK13, thereby increasing HIV-1 mRNA splicing and promoting the production of the doubly spliced HIV-1 protein Nef. Interacts with host TBP; this interaction modulates the activity of transcriptional pre-initiation complex. Interacts with host RELA. Interacts with host PLSCR1; this interaction negatively regulates Tat transactivation activity by altering its subcellular distribution. In terms of processing, asymmetrical arginine methylation by host PRMT6 seems to diminish the transactivation capacity of Tat and affects the interaction with host CCNT1. Acetylation by EP300, CREBBP, GCN5L2/GCN5 and PCAF regulates the transactivation activity of Tat. EP300-mediated acetylation of Lys-50 promotes dissociation of Tat from the TAR RNA through the competitive binding to PCAF's bromodomain. In addition, the non-acetylated Tat's N-terminus can also interact with PCAF. PCAF-mediated acetylation of Lys-28 enhances Tat's binding to CCNT1. Lys-50 is deacetylated by SIRT1. Post-translationally, polyubiquitination by host MDM2 does not target Tat to degradation, but activates its transactivation function and fosters interaction with CCNT1 and TAR RNA. In terms of processing, phosphorylated by EIF2AK2 on serine and threonine residues adjacent to the basic region important for TAR RNA binding and function. Phosphorylation of Tat by EIF2AK2 is dependent on the prior activation of EIF2AK2 by dsRNA.

It localises to the host nucleus. Its subcellular location is the host nucleolus. The protein localises to the host cytoplasm. It is found in the secreted. Transcriptional activator that increases RNA Pol II processivity, thereby increasing the level of full-length viral transcripts. Recognizes a hairpin structure at the 5'-LTR of the nascent viral mRNAs referred to as the transactivation responsive RNA element (TAR) and recruits the cyclin T1-CDK9 complex (P-TEFb complex) that will in turn hyperphosphorylate the RNA polymerase II to allow efficient elongation. The CDK9 component of P-TEFb and other Tat-activated kinases hyperphosphorylate the C-terminus of RNA Pol II that becomes stabilized and much more processive. Other factors such as HTATSF1/Tat-SF1, SUPT5H/SPT5, and HTATIP2 are also important for Tat's function. Besides its effect on RNA Pol II processivity, Tat induces chromatin remodeling of proviral genes by recruiting the histone acetyltransferases (HATs) CREBBP, EP300 and PCAF to the chromatin. This also contributes to the increase in proviral transcription rate, especially when the provirus integrates in transcriptionally silent region of the host genome. To ensure maximal activation of the LTR, Tat mediates nuclear translocation of NF-kappa-B by interacting with host RELA. Through its interaction with host TBP, Tat may also modulate transcription initiation. Tat can reactivate a latently infected cell by penetrating in it and transactivating its LTR promoter. In the cytoplasm, Tat is thought to act as a translational activator of HIV-1 mRNAs. Its function is as follows. Extracellular circulating Tat can be endocytosed by surrounding uninfected cells via the binding to several surface receptors such as CD26, CXCR4, heparan sulfate proteoglycans (HSPG) or LDLR. Neurons are rarely infected, but they internalize Tat via their LDLR. Through its interaction with nuclear HATs, Tat is potentially able to control the acetylation-dependent cellular gene expression. Modulates the expression of many cellular genes involved in cell survival, proliferation or in coding for cytokines or cytokine receptors. Tat plays a role in T-cell and neurons apoptosis. Tat induced neurotoxicity and apoptosis probably contribute to neuroAIDS. Circulating Tat also acts as a chemokine-like and/or growth factor-like molecule that binds to specific receptors on the surface of the cells, affecting many cellular pathways. In the vascular system, Tat binds to ITGAV/ITGB3 and ITGA5/ITGB1 integrins dimers at the surface of endothelial cells and competes with bFGF for heparin-binding sites, leading to an excess of soluble bFGF. The protein is Protein Tat of Homo sapiens (Human).